Here is a 241-residue protein sequence, read N- to C-terminus: Uridylate kinase (241 aa).

12-15 (KLSG) provides a ligand contact to ATP. A UMP-binding site is contributed by glycine 54. Positions 55 and 59 each coordinate ATP. UMP is bound by residues aspartate 74 and 135–142 (TGNPFFTT). Threonine 162, tyrosine 168, and aspartate 171 together coordinate ATP.

Belongs to the UMP kinase family. Homohexamer.

It localises to the cytoplasm. The catalysed reaction is UMP + ATP = UDP + ADP. The protein operates within pyrimidine metabolism; CTP biosynthesis via de novo pathway; UDP from UMP (UMPK route): step 1/1. Inhibited by UTP. Its function is as follows. Catalyzes the reversible phosphorylation of UMP to UDP. The protein is Uridylate kinase of Magnetococcus marinus (strain ATCC BAA-1437 / JCM 17883 / MC-1).